A 188-amino-acid polypeptide reads, in one-letter code: Meiotically up-regulated gene 94 protein (188 aa).

Its subcellular location is the cytoplasm. The protein resides in the nucleus. Functionally, has a role in meiosis. This Schizosaccharomyces pombe (strain 972 / ATCC 24843) (Fission yeast) protein is Meiotically up-regulated gene 94 protein (mug94).